Reading from the N-terminus, the 719-residue chain is Developmental regulator flbA (719 aa).

Positions 1-17 (MPTSISTAPLSQGSPPS) are enriched in polar residues. Disordered regions lie at residues 1-39 (MPTS…STAA), 117-141 (IGST…SRKA), and 155-190 (LSPP…AAER). 2 stretches are compositionally biased toward low complexity: residues 123–135 (SSLR…GSLQ) and 158–171 (PLSD…QSSS). The fungal-DR stretch occupies residues 214 to 411 (QTSSRLLRMT…QDGPNVKSSV (198 aa)). One can recognise a DEP domain in the interval 425–511 (GLVGVKMARE…SKNAIYAITE (87 aa)). The RGS domain occupies 540–685 (SNNARLNHIL…FLRDPKYSAI (146 aa)). The disordered stretch occupies residues 694–719 (LIGGGRSYSPTPGNVPERSMSRSQRS).

Its function is as follows. Required for asexual sporulation and normal colony development. May be involved in brlA activation. Could play a regulatory role in controlling the flug-initiated signal transduction pathway that triggers the asexual reproduction. This is Developmental regulator flbA (flbA) from Emericella nidulans (strain FGSC A4 / ATCC 38163 / CBS 112.46 / NRRL 194 / M139) (Aspergillus nidulans).